Here is a 338-residue protein sequence, read N- to C-terminus: Ketol-acid reductoisomerase (NADP(+)) (338 aa).

The KARI N-terminal Rossmann domain occupies 1–181; that stretch reads MQIYYDKDAD…GGGRAGIIET (181 aa). Residues 24–27, arginine 47, serine 50, serine 52, and 82–85 each bind NADP(+); these read YGSQ and DEHQ. Residue histidine 107 is part of the active site. Residue glycine 133 coordinates NADP(+). In terms of domain architecture, KARI C-terminal knotted spans 182–327; it reads TFREETETDL…ARLRDMMPWI (146 aa). Residues aspartate 190, glutamate 194, glutamate 226, and glutamate 230 each contribute to the Mg(2+) site. Residue serine 251 coordinates substrate.

This sequence belongs to the ketol-acid reductoisomerase family. Mg(2+) is required as a cofactor.

It carries out the reaction (2R)-2,3-dihydroxy-3-methylbutanoate + NADP(+) = (2S)-2-acetolactate + NADPH + H(+). The enzyme catalyses (2R,3R)-2,3-dihydroxy-3-methylpentanoate + NADP(+) = (S)-2-ethyl-2-hydroxy-3-oxobutanoate + NADPH + H(+). It functions in the pathway amino-acid biosynthesis; L-isoleucine biosynthesis; L-isoleucine from 2-oxobutanoate: step 2/4. The protein operates within amino-acid biosynthesis; L-valine biosynthesis; L-valine from pyruvate: step 2/4. In terms of biological role, involved in the biosynthesis of branched-chain amino acids (BCAA). Catalyzes an alkyl-migration followed by a ketol-acid reduction of (S)-2-acetolactate (S2AL) to yield (R)-2,3-dihydroxy-isovalerate. In the isomerase reaction, S2AL is rearranged via a Mg-dependent methyl migration to produce 3-hydroxy-3-methyl-2-ketobutyrate (HMKB). In the reductase reaction, this 2-ketoacid undergoes a metal-dependent reduction by NADPH to yield (R)-2,3-dihydroxy-isovalerate. This is Ketol-acid reductoisomerase (NADP(+)) from Methylococcus capsulatus (strain ATCC 33009 / NCIMB 11132 / Bath).